Consider the following 334-residue polypeptide: Endochitinase 3 (334 aa).

An N-terminal signal peptide occupies residues 1–23 (MRLLEFTALSSLLVLFLLLAVSA). One can recognise a Chitin-binding type-1 domain in the interval 24 to 65 (EQCGKQAGGARCPSGMCCSNFGWCGNTQDYCGPGKCQSQCPS). Disulfide bonds link C26–C41, C35–C47, C40–C54, and C59–C63. The disordered stretch occupies residues 64-84 (PSGPGPTPRPPTPTPGPSTGD). Over residues 66–79 (GPGPTPRPPTPTPG) the composition is skewed to pro residues. 3 positions are modified to 4-hydroxyproline: P73, P74, and P76. Disulfide bonds link C106-C168, C180-C188, and C287-C319. E150 functions as the Proton donor in the catalytic mechanism. A propeptide spans 328–334 (GLLLETM) (removed in mature form).

It belongs to the glycosyl hydrolase 19 family. Chitinase class I subfamily. The 4-hydroxyproline residues are not glycosylated in this plant vacuolar protein.

Its subcellular location is the vacuole. The catalysed reaction is Random endo-hydrolysis of N-acetyl-beta-D-glucosaminide (1-&gt;4)-beta-linkages in chitin and chitodextrins.. In terms of biological role, defense against chitin-containing fungal pathogens. This chain is Endochitinase 3 (CHN14), found in Nicotiana tabacum (Common tobacco).